The chain runs to 57 residues: MPAIQPPLYLTFLLLTLLYLIITLYVWTILTINHNTAVRYAALYQRSFSRWGFDQSL.

Over Met1 to Leu8 the chain is Virion surface. The helical transmembrane segment at Tyr9–Ile29 threads the bilayer. At Leu30–Leu57 the chain is on the intravirion side.

Belongs to the rubulavirus small hydrophobic protein family. In terms of assembly, interacts with host TNFRSF1A, RIPK1 and IRAK1; these interactions interfere with host NF-kappa-B activation at the level of receptor complexes. Interacts with host protein UBQLN4.

The protein localises to the virion membrane. It is found in the host cell membrane. Its function is as follows. Plays a role in the inhibition of the host NF-kappa-B pathway. This inhibition occurs at the receptor level, by preventing the signaling of TNFR1 as well as IL-1R and TLR3. In Mumps virus genotype A (strain Jeryl-Lynn) (MuV), this protein is Small hydrophobic protein (SH).